The chain runs to 308 residues: tRNA pseudouridine synthase B (308 aa).

Aspartate 47 functions as the Nucleophile in the catalytic mechanism.

The protein belongs to the pseudouridine synthase TruB family. Type 1 subfamily.

It catalyses the reaction uridine(55) in tRNA = pseudouridine(55) in tRNA. Responsible for synthesis of pseudouridine from uracil-55 in the psi GC loop of transfer RNAs. This is tRNA pseudouridine synthase B from Xanthomonas campestris pv. campestris (strain B100).